The primary structure comprises 348 residues: MHLPPAAAVGLLLLLLPPPARVASRKPTMCQRCRALVDKFNQGMANTARKNFGGGNTAWEEKSLSKYEFSEIRLLEIMEGLCDSNDFECNQLLEQHEEQLEAWWQTLKKECPNLFEWFCVHTLKACCLPGTYGPDCQECQGGSQRPCSGNGHCDGDGSRQGDGSCQCHVGYKGPLCIDCMDGYFSLLRNETHSFCTACDESCKTCSGPTNKGCVECEVGWTRVEDACVDVDECAAETPPCSNVQYCENVNGSYTCEECDSTCVGCTGKGPANCKECISGYSKQKGECADIDECSLETKVCKKENENCYNTPGSFVCVCPEGFEEDRRCLCTDSRRRSGRGKSHTATLP.

Positions 1–22 (MHLPPAAAVGLLLLLLPPPARV) are cleaved as a signal peptide. The CXXC motif lies at 30 to 33 (CQRC). Intrachain disulfides connect Cys-30–Cys-33, Cys-139–Cys-153, Cys-147–Cys-165, and Cys-167–Cys-176. Residues 135-177 (DCQECQGGSQRPCSGNGHCDGDGSRQGDGSCQCHVGYKGPLCI) enclose the EGF-like 1 domain. The FU 1 repeat unit spans residues 192-239 (HSFCTACDESCKTCSGPTNKGCVECEVGWTRVEDACVDVDECAAETPP). N-linked (GlcNAc...) asparagine glycosylation is present at Asn-250. One copy of the FU 2 repeat lies at 252 to 299 (SYTCEECDSTCVGCTGKGPANCKECISGYSKQKGECADIDECSLETKV). A CXXC motif is present at residues 262–265 (CVGC). Disulfide bonds link Cys-262–Cys-265, Cys-293–Cys-307, Cys-300–Cys-316, and Cys-318–Cys-328. The region spanning 289-329 (DIDECSLETKVCKKENENCYNTPGSFVCVCPEGFEEDRRCL) is the EGF-like 2; calcium-binding domain.

The protein belongs to the CRELD family. As to quaternary structure, interacts with CHRNA4. Component of a complex containing at least CRELD2, MANF, MATN3 and PDIA4.

The protein resides in the endoplasmic reticulum. It catalyses the reaction Catalyzes the rearrangement of -S-S- bonds in proteins.. In terms of biological role, protein disulfide isomerase. Might play a role in the unfolded protein response. May regulate transport of alpha4-beta2 neuronal acetylcholine receptor. The protein is Protein disulfide isomerase CRELD2 (CRELD2) of Cricetulus griseus (Chinese hamster).